We begin with the raw amino-acid sequence, 213 residues long: Putative thymidylate kinase 251L (213 aa).

Residue 21–28 participates in ATP binding; the sequence is GCDKTGKS.

Belongs to the thymidylate kinase family.

It catalyses the reaction dTMP + ATP = dTDP + ADP. Its pathway is pyrimidine metabolism; dTTP biosynthesis. Catalyzes the conversion of dTMP to dTDP. This Acheta domesticus (House cricket) protein is Putative thymidylate kinase 251L.